An 892-amino-acid chain; its full sequence is DNA mismatch repair protein MutS (892 aa).

607 to 614 (GPNMSGKS) provides a ligand contact to ATP. Positions 826-854 (ETKAETEEESQLSFFGGEQSSKKQDKPVL) are disordered. The span at 845-854 (SSKKQDKPVL) shows a compositional bias: basic and acidic residues.

This sequence belongs to the DNA mismatch repair MutS family.

In terms of biological role, this protein is involved in the repair of mismatches in DNA. It is possible that it carries out the mismatch recognition step. This protein has a weak ATPase activity. The polypeptide is DNA mismatch repair protein MutS (Bacillus cereus (strain AH187)).